A 260-amino-acid chain; its full sequence is (+)-borneol dehydrogenase 1 (260 aa).

Residues 20 to 26, Asp44, 67 to 68, and 94 to 96 contribute to the NAD(+) site; these read GGASGIG, DV, and NAG. Catalysis depends on Ser148, which acts as the Proton donor. NAD(+) is bound by residues Tyr161, Lys165, and Thr196. Tyr161 serves as the catalytic Proton acceptor. The Proton donor/acceptor role is filled by Lys165.

Belongs to the short-chain dehydrogenases/reductases (SDR) family.

The enzyme catalyses (1R,2S,4R)-borneol + NAD(+) = (1R,4R)-camphor + NADH + H(+). Its function is as follows. Involved in the biosynthesis of monoterpene natural products related to camphor. Catalayzes the oxidation of (+)-borneol to (+)-camphor. Shows absolute selectivity towards (+)-borneol. Catalyzes the oxidation of (+)-isoborneol to (-)-camphor. Shows absolute selectivity towards (+)-isoborneol. The chain is (+)-borneol dehydrogenase 1 from Salvia officinalis (Sage).